The primary structure comprises 354 residues: Ferrochelatase (354 aa).

H204 and E306 together coordinate Fe cation.

This sequence belongs to the ferrochelatase family.

Its subcellular location is the cytoplasm. The enzyme catalyses heme b + 2 H(+) = protoporphyrin IX + Fe(2+). The protein operates within porphyrin-containing compound metabolism; protoheme biosynthesis; protoheme from protoporphyrin-IX: step 1/1. Catalyzes the ferrous insertion into protoporphyrin IX. This is Ferrochelatase from Coxiella burnetii (strain Dugway 5J108-111).